The chain runs to 778 residues: Lon protease (778 aa).

In terms of domain architecture, Lon N-terminal spans 6-207 (LPLMALRDMV…TVISMLNSNI (202 aa)). ATP is bound at residue 356–363 (GPPGVGKT). A Lon proteolytic domain is found at 592-773 (EDQIGSTTGL…DQVLKHALVG (182 aa)). Active-site residues include serine 679 and lysine 722.

Belongs to the peptidase S16 family. As to quaternary structure, homohexamer. Organized in a ring with a central cavity.

It localises to the cytoplasm. It catalyses the reaction Hydrolysis of proteins in presence of ATP.. Functionally, ATP-dependent serine protease that mediates the selective degradation of mutant and abnormal proteins as well as certain short-lived regulatory proteins. Required for cellular homeostasis and for survival from DNA damage and developmental changes induced by stress. Degrades polypeptides processively to yield small peptide fragments that are 5 to 10 amino acids long. Binds to DNA in a double-stranded, site-specific manner. The polypeptide is Lon protease (Rickettsia conorii (strain ATCC VR-613 / Malish 7)).